A 315-amino-acid polypeptide reads, in one-letter code: Secreted mono- and diacylglycerol lipase LIP2 (315 aa).

Positions 1 to 21 (MACFRVILYLSVIFFVQCVFA) are cleaved as a signal peptide. Cysteine 68 and cysteine 308 are joined by a disulfide. Asparagine 74 is a glycosylation site (N-linked (GlcNAc...) asparagine). Serine 182 serves as the catalytic Nucleophile. Aspartate 240 is an active-site residue. Residue asparagine 265 is glycosylated (N-linked (GlcNAc...) asparagine). Histidine 292 is an active-site residue.

It belongs to the AB hydrolase superfamily. Lipase family. Class 3 subfamily.

It is found in the secreted. The enzyme catalyses a monoacylglycerol + H2O = glycerol + a fatty acid + H(+). It catalyses the reaction a diacylglycerol + H2O = a monoacylglycerol + a fatty acid + H(+). Its function is as follows. Secreted lipase involved in Dandruff and seborrheic dermatitis (D/SD) probably via lipase-mediated breakdown of sebaceous lipids and release of irritating free fatty acids. Shows activity against monoglyceride and diglyceride substrates and generates free oleic acid from the substrates mono- and diolein. Able to cleave the oleic acid from both the 1 and the 2 position of the glycerol backbone as 1,2 isomers of diolein were converted into oleic acid and glycerol. Due to an absence of fatty acid synthase genes in Malassezia species, secretory lipases are essential for the yeast to generate free fatty acids from degradation of sebum and assimilate them as lipid sources for growth. Plays an essential role at the pathogen-host interface during disease progression. Also performs the reverse reaction to build diacylglycerols from monoacylglycerols. In Malassezia restricta (strain ATCC 96810 / NBRC 103918 / CBS 7877) (Seborrheic dermatitis infection agent), this protein is Secreted mono- and diacylglycerol lipase LIP2.